The following is a 474-amino-acid chain: NAD(P) transhydrogenase subunit beta (474 aa).

Transmembrane regions (helical) follow at residues 4–24 (GLVQ…LAGL), 46–66 (IATI…AMII), 83–103 (MPEL…LVGF), 132–152 (VLTN…AVTF), 181–200 (LAAL…NPES), 202–222 (FPVL…VASI), 229–249 (VVVS…GFIL), 253–273 (LLIV…YIMC), and 321–341 (VIIT…VADI).

This sequence belongs to the PNT beta subunit family. In terms of assembly, heterodimer of an alpha and a beta chain.

The protein resides in the cell inner membrane. The catalysed reaction is NAD(+) + NADPH + H(+)(in) = NADH + NADP(+) + H(+)(out). Its function is as follows. The transhydrogenation between NADH and NADP is coupled to respiration and ATP hydrolysis and functions as a proton pump across the membrane. This chain is NAD(P) transhydrogenase subunit beta (pntB), found in Haemophilus influenzae (strain ATCC 51907 / DSM 11121 / KW20 / Rd).